Consider the following 132-residue polypeptide: Ribosome-binding factor A (132 aa).

This sequence belongs to the RbfA family. In terms of assembly, monomer. Binds 30S ribosomal subunits, but not 50S ribosomal subunits or 70S ribosomes.

It localises to the cytoplasm. One of several proteins that assist in the late maturation steps of the functional core of the 30S ribosomal subunit. Associates with free 30S ribosomal subunits (but not with 30S subunits that are part of 70S ribosomes or polysomes). Required for efficient processing of 16S rRNA. May interact with the 5'-terminal helix region of 16S rRNA. In Pectobacterium carotovorum subsp. carotovorum (strain PC1), this protein is Ribosome-binding factor A.